The primary structure comprises 266 residues: Apolipoprotein A-I (266 aa).

An N-terminal signal peptide occupies residues 1 to 18 (MKAVVLTLAVLFLTGSQA). 2 tandem repeats follow at residues 67 to 88 (LKLLDNWDSLSSTVAKLREQIG) and 89 to 110 (PVTQEFWDNLEKETEVLRQEMN). Positions 67–266 (LKLLDNWDSL…DEATKKLNSQ (200 aa)) are 10 X approximate tandem repeats. A Methionine sulfoxide modification is found at Met109. A 3; half-length repeat occupies 111 to 121 (KDLEEVKKKVQ). Repeat copies occupy residues 122–143 (PYLDEFQSKWHEEVELYRQKVA), 144–165 (PLGAELREGARQKLQELQEKLS), 166–187 (PLGEELRDRARTHVDALRAQLA), 188–209 (PYSEQLRERLAARLQALKEGGG), and 210–231 (AALTEYHAKASEHLSALREKAK). The 9; half-length repeat unit spans residues 232 to 242 (PALEDLRQGLL). The stretch at 243-266 (PVLENFRDSLLAAVDEATKKLNSQ) is repeat 10.

It belongs to the apolipoprotein A1/A4/E family. Homodimer. Interacts with APOA1BP and CLU. Component of a sperm activating protein complex (SPAP), consisting of APOA1, an immunoglobulin heavy chain, an immunoglobulin light chain and albumin. Interacts with NDRG1. Interacts with SCGB3A2. Interacts with NAXE and YJEFN3. Post-translationally, glycosylated. In terms of processing, palmitoylated. Phosphorylation sites are present in the extracellular medium.

The protein resides in the secreted. Its function is as follows. Participates in the reverse transport of cholesterol from tissues to the liver for excretion by promoting cholesterol efflux from tissues and by acting as a cofactor for the lecithin cholesterol acyltransferase (LCAT). As part of the SPAP complex, activates spermatozoa motility. The sequence is that of Apolipoprotein A-I (APOA1) from Neomonachus schauinslandi (Hawaiian monk seal).